Reading from the N-terminus, the 366-residue chain is Uroporphyrinogen decarboxylase (366 aa).

Substrate is bound by residues 28-32, Asp78, Tyr160, Thr215, and His333; that span reads RQAGR.

This sequence belongs to the uroporphyrinogen decarboxylase family. As to quaternary structure, homodimer.

The protein resides in the cytoplasm. It carries out the reaction uroporphyrinogen III + 4 H(+) = coproporphyrinogen III + 4 CO2. Its pathway is porphyrin-containing compound metabolism; protoporphyrin-IX biosynthesis; coproporphyrinogen-III from 5-aminolevulinate: step 4/4. Its function is as follows. Catalyzes the decarboxylation of four acetate groups of uroporphyrinogen-III to yield coproporphyrinogen-III. The sequence is that of Uroporphyrinogen decarboxylase from Paraburkholderia xenovorans (strain LB400).